Here is a 114-residue protein sequence, read N- to C-terminus: Large ribosomal subunit protein bL19 (114 aa).

It belongs to the bacterial ribosomal protein bL19 family.

Functionally, this protein is located at the 30S-50S ribosomal subunit interface and may play a role in the structure and function of the aminoacyl-tRNA binding site. The protein is Large ribosomal subunit protein bL19 of Desulfatibacillum aliphaticivorans.